A 390-amino-acid polypeptide reads, in one-letter code: 23S rRNA (uracil(747)-C(5))-methyltransferase RlmC (390 aa).

Positions 12, 20, 23, and 100 each coordinate [4Fe-4S] cluster. Positions 225, 254, 275, and 322 each coordinate S-adenosyl-L-methionine. Cys-349 (nucleophile) is an active-site residue.

Belongs to the class I-like SAM-binding methyltransferase superfamily. RNA M5U methyltransferase family. RlmC subfamily.

It catalyses the reaction uridine(747) in 23S rRNA + S-adenosyl-L-methionine = 5-methyluridine(747) in 23S rRNA + S-adenosyl-L-homocysteine + H(+). Its function is as follows. Catalyzes the formation of 5-methyl-uridine at position 747 (m5U747) in 23S rRNA. This chain is 23S rRNA (uracil(747)-C(5))-methyltransferase RlmC, found in Shewanella baltica (strain OS185).